The primary structure comprises 172 residues: Zinc finger protein 580 (172 aa).

A disordered region spans residues 1 to 92; it reads MLLLPPRPPH…PGEPGPRKGY (92 aa). Over residues 19–30 the composition is skewed to pro residues; sequence MDPPPPKTPPFP. Lys31 participates in a covalent cross-link: Glycyl lysine isopeptide (Lys-Gly) (interchain with G-Cter in SUMO2). A C2H2-type 1 zinc finger spans residues 92 to 114; it reads YSCPECARVFASPLRLQSHRVSH. Lys118 participates in a covalent cross-link: Glycyl lysine isopeptide (Lys-Gly) (interchain with G-Cter in SUMO2). C2H2-type zinc fingers lie at residues 120 to 142 and 150 to 172; these read FTCG…RATH and HTCP…VRLH.

Interacts with SMAD2.

Its subcellular location is the nucleus. In terms of biological role, involved in the regulation of endothelial cell proliferation and migration. Mediates H(2)O(2)-induced leukocyte chemotaxis by elevating interleukin-8 production and may play a role in inflammation. May be involved in transcriptional regulation. The chain is Zinc finger protein 580 (Znf580) from Mus musculus (Mouse).